Here is a 758-residue protein sequence, read N- to C-terminus: Ferrichrome receptor FcuA (758 aa).

The first 36 residues, Met-1–Ala-36, serve as a signal peptide directing secretion. The short motif at Asp-66 to Ala-73 is the TonB box element. The TBDR plug domain maps to Asp-106–Lys-216. The 538-residue stretch at Thr-221–Phe-758 folds into the TBDR beta-barrel domain. The TonB C-terminal box motif lies at Tyr-741 to Phe-758.

The protein belongs to the TonB-dependent receptor family.

The protein localises to the cell outer membrane. Its function is as follows. Receptor for the hydroxamate siderophore, ferrichrome. Binds also to most other ferrichrome derivatives except enantio ferrichrome and ferric rhodotorulate. This is Ferrichrome receptor FcuA (fcuA) from Yersinia enterocolitica.